Here is a 220-residue protein sequence, read N- to C-terminus: Ribosomal RNA small subunit methyltransferase G (220 aa).

S-adenosyl-L-methionine is bound by residues Gly-78, Leu-83, and Arg-144.

Belongs to the methyltransferase superfamily. RNA methyltransferase RsmG family.

The protein resides in the cytoplasm. It carries out the reaction guanosine(527) in 16S rRNA + S-adenosyl-L-methionine = N(7)-methylguanosine(527) in 16S rRNA + S-adenosyl-L-homocysteine. In terms of biological role, specifically methylates the N7 position of guanine in position 527 of 16S rRNA. This chain is Ribosomal RNA small subunit methyltransferase G, found in Alkalilimnicola ehrlichii (strain ATCC BAA-1101 / DSM 17681 / MLHE-1).